A 417-amino-acid polypeptide reads, in one-letter code: Probable serpin E3 (417 aa).

An N-terminal signal peptide occupies residues 1 to 24; sequence MPQLSASSLFICLWLVDLCHVANS. Residues Asn-50, Asn-106, Asn-140, Asn-147, and Asn-152 are each glycosylated (N-linked (GlcNAc...) asparagine).

Belongs to the serpin family.

Its subcellular location is the secreted. Probable serine protease inhibitor. The polypeptide is Probable serpin E3 (serpine3) (Danio rerio (Zebrafish)).